A 436-amino-acid polypeptide reads, in one-letter code: APO protein 1, chloroplastic (436 aa).

The transit peptide at 1-47 (MLLVSPACRGVYLQTIDPKPIDFSARASYALCFQIPTSIPKRECLMR) directs the protein to the chloroplast. 2 APO domains span residues 155–240 (ACSE…EIPE) and 329–414 (ACGY…RVPQ).

This sequence belongs to the APO family. In terms of tissue distribution, expressed at low level. Expressed at higher level in leaves. Expressed at lower level in roots, stems, siliques and flowers.

The protein localises to the plastid. Its subcellular location is the chloroplast. Functionally, involved in the stable assembly of several 4Fe-4S cluster-containing complexes of chloroplasts. May participate in 4Fe-4S cofactor incorporation into psaA and/or psaB during translation. The chain is APO protein 1, chloroplastic (APO1) from Arabidopsis thaliana (Mouse-ear cress).